The chain runs to 91 residues: DNA-directed RNA polymerase subunit omega (91 aa).

The protein belongs to the RNA polymerase subunit omega family. In terms of assembly, the RNAP catalytic core consists of 2 alpha, 1 beta, 1 beta' and 1 omega subunit. When a sigma factor is associated with the core the holoenzyme is formed, which can initiate transcription.

It carries out the reaction RNA(n) + a ribonucleoside 5'-triphosphate = RNA(n+1) + diphosphate. Functionally, promotes RNA polymerase assembly. Latches the N- and C-terminal regions of the beta' subunit thereby facilitating its interaction with the beta and alpha subunits. This Enterobacter sp. (strain 638) protein is DNA-directed RNA polymerase subunit omega.